Consider the following 578-residue polypeptide: Sulfite reductase [NADPH] hemoprotein beta-component (578 aa).

[4Fe-4S] cluster is bound by residues Cys-441, Cys-447, Cys-487, and Cys-491. Cys-491 provides a ligand contact to siroheme.

It belongs to the nitrite and sulfite reductase 4Fe-4S domain family. Alpha(8)-beta(8). The alpha component is a flavoprotein, the beta component is a hemoprotein. Siroheme is required as a cofactor. Requires [4Fe-4S] cluster as cofactor.

It carries out the reaction hydrogen sulfide + 3 NADP(+) + 3 H2O = sulfite + 3 NADPH + 4 H(+). Its pathway is sulfur metabolism; hydrogen sulfide biosynthesis; hydrogen sulfide from sulfite (NADPH route): step 1/1. Component of the sulfite reductase complex that catalyzes the 6-electron reduction of sulfite to sulfide. This is one of several activities required for the biosynthesis of L-cysteine from sulfate. The protein is Sulfite reductase [NADPH] hemoprotein beta-component of Vibrio vulnificus (strain YJ016).